The primary structure comprises 418 residues: Enolase (418 aa).

Gln162 contributes to the (2R)-2-phosphoglycerate binding site. The Proton donor role is filled by Glu204. 3 residues coordinate Mg(2+): Asp241, Glu283, and Asp309. (2R)-2-phosphoglycerate-binding residues include Lys334, Arg363, Ser364, and Lys385. Catalysis depends on Lys334, which acts as the Proton acceptor.

It belongs to the enolase family. Mg(2+) serves as cofactor.

It is found in the cytoplasm. The protein resides in the secreted. The protein localises to the cell surface. The catalysed reaction is (2R)-2-phosphoglycerate = phosphoenolpyruvate + H2O. It functions in the pathway carbohydrate degradation; glycolysis; pyruvate from D-glyceraldehyde 3-phosphate: step 4/5. Functionally, catalyzes the reversible conversion of 2-phosphoglycerate (2-PG) into phosphoenolpyruvate (PEP). It is essential for the degradation of carbohydrates via glycolysis. In Pelagibacter ubique (strain HTCC1062), this protein is Enolase.